Consider the following 172-residue polypeptide: Adenine phosphoribosyltransferase (172 aa).

The protein belongs to the purine/pyrimidine phosphoribosyltransferase family. As to quaternary structure, homodimer.

The protein resides in the cytoplasm. The enzyme catalyses AMP + diphosphate = 5-phospho-alpha-D-ribose 1-diphosphate + adenine. It functions in the pathway purine metabolism; AMP biosynthesis via salvage pathway; AMP from adenine: step 1/1. Its function is as follows. Catalyzes a salvage reaction resulting in the formation of AMP, that is energically less costly than de novo synthesis. The polypeptide is Adenine phosphoribosyltransferase (Herpetosiphon aurantiacus (strain ATCC 23779 / DSM 785 / 114-95)).